The following is a 107-amino-acid chain: Integration host factor subunit beta (107 aa).

Residues 56 to 107 (RPSRVGRNPKSGEKVLVPEKHVPHFKPGKELRERVDRNAGEPLKADAADDDL) are disordered. Residues 65 to 107 (KSGEKVLVPEKHVPHFKPGKELRERVDRNAGEPLKADAADDDL) show a composition bias toward basic and acidic residues.

This sequence belongs to the bacterial histone-like protein family. As to quaternary structure, heterodimer of an alpha and a beta chain.

Functionally, this protein is one of the two subunits of integration host factor, a specific DNA-binding protein that functions in genetic recombination as well as in transcriptional and translational control. The polypeptide is Integration host factor subunit beta (Paraburkholderia phymatum (strain DSM 17167 / CIP 108236 / LMG 21445 / STM815) (Burkholderia phymatum)).